The following is a 428-amino-acid chain: Protein ECERIFERUM 26 (428 aa).

The tract at residues 1-36 (MGRSQEQGQGQGPVHSIRLSTVGATRPTETGTTHEP) is disordered. Over residues 21–36 (TVGATRPTETGTTHEP) the composition is skewed to low complexity.

Belongs to the plant acyltransferase family. Highly expressed in leaves.

The protein resides in the cytoplasm. It is found in the cytosol. In terms of biological role, involved in biosynthesis of the epicuticular wax. Plays a role in very-long-chain fatty acid (VLCFA) biosynthesis and is required for C30 fatty acid elongation in leaf. Despite its classification as a BAHD acyltransferase based on sequence homology, CER26 does not seem to share the catalytic mechanism of the members of the BAHD family. The chain is Protein ECERIFERUM 26 (CER26) from Arabidopsis thaliana (Mouse-ear cress).